A 131-amino-acid polypeptide reads, in one-letter code: Small ribosomal subunit protein uS8 (131 aa).

It belongs to the universal ribosomal protein uS8 family. As to quaternary structure, part of the 30S ribosomal subunit. Contacts proteins S5 and S12.

One of the primary rRNA binding proteins, it binds directly to 16S rRNA central domain where it helps coordinate assembly of the platform of the 30S subunit. The protein is Small ribosomal subunit protein uS8 of Erythrobacter litoralis (strain HTCC2594).